Here is a 472-residue protein sequence, read N- to C-terminus: DNA-cytosine methyltransferase (472 aa).

An SAM-dependent MTase C5-type domain is found at 87–457 (FRFIDLFAGI…KLLEPKIKQA (371 aa)). Residue C177 is part of the active site.

Belongs to the class I-like SAM-binding methyltransferase superfamily. C5-methyltransferase family.

The enzyme catalyses a 2'-deoxycytidine in DNA + S-adenosyl-L-methionine = a 5-methyl-2'-deoxycytidine in DNA + S-adenosyl-L-homocysteine + H(+). In terms of biological role, this methylase recognizes the double-stranded sequence 5'-CCWGG-3', methylates C-2 on both strands. The polypeptide is DNA-cytosine methyltransferase (dcm) (Escherichia coli O157:H7).